We begin with the raw amino-acid sequence, 431 residues long: MGTVVIVGTQWGDEGKGKITDFLSQGAKVVSRYQGGDNAGHTIHANGEVYKLRLVPSGVLYPHQLSVIGNGVVVNPKSLVGELARLAEQGVTGENLRISDRAHVILPYHIKLDKLQEAAKGADKIGTTNRGIGPAYMDKAARVGIRMADLLDKEIFEERLKANLKAKNEEFVKVYDSTPMNFDDIFEEYYQYGQQLKQYVCDTSIVLNDAIDKGEHVLFEGAQGIMLDIDQGTYPFVTSSNPAGGVTVGAGVGASKIDRVVGVAKAYTSRVGDGPFPTELLDKTGDFIRNAGHEFGTVTGRPRRIGWFDAVVVRHSRRVAGITDLCLNSIDVLTGLDKVKICVAYERDGERVENYPASLKFLSECKPVYEELPGWQEDITKAKTLDDLPENARRYVERITELLGVDLLTFSVGPDRDQTNVLENVWDKVSR.

GTP is bound by residues 12–18 (GDEGKGK) and 40–42 (GHT). The Proton acceptor role is filled by D13. Residues D13 and G40 each contribute to the Mg(2+) site. IMP is bound by residues 13-16 (DEGK), 38-41 (NAGH), T128, R142, Q223, T238, and R301. The active-site Proton donor is H41. 297-303 (TVTGRPR) is a binding site for substrate. GTP-binding positions include R303, 329–331 (SID), and 411–413 (SVG).

It belongs to the adenylosuccinate synthetase family. In terms of assembly, homodimer. Mg(2+) is required as a cofactor.

It is found in the cytoplasm. It catalyses the reaction IMP + L-aspartate + GTP = N(6)-(1,2-dicarboxyethyl)-AMP + GDP + phosphate + 2 H(+). It participates in purine metabolism; AMP biosynthesis via de novo pathway; AMP from IMP: step 1/2. In terms of biological role, plays an important role in the de novo pathway of purine nucleotide biosynthesis. Catalyzes the first committed step in the biosynthesis of AMP from IMP. The polypeptide is Adenylosuccinate synthetase (Lacticaseibacillus paracasei (strain ATCC 334 / BCRC 17002 / CCUG 31169 / CIP 107868 / KCTC 3260 / NRRL B-441) (Lactobacillus paracasei)).